The following is a 341-amino-acid chain: S-adenosylmethionine:tRNA ribosyltransferase-isomerase (341 aa).

The protein belongs to the QueA family. As to quaternary structure, monomer.

It is found in the cytoplasm. The catalysed reaction is 7-aminomethyl-7-carbaguanosine(34) in tRNA + S-adenosyl-L-methionine = epoxyqueuosine(34) in tRNA + adenine + L-methionine + 2 H(+). It participates in tRNA modification; tRNA-queuosine biosynthesis. Functionally, transfers and isomerizes the ribose moiety from AdoMet to the 7-aminomethyl group of 7-deazaguanine (preQ1-tRNA) to give epoxyqueuosine (oQ-tRNA). This chain is S-adenosylmethionine:tRNA ribosyltransferase-isomerase, found in Halothermothrix orenii (strain H 168 / OCM 544 / DSM 9562).